We begin with the raw amino-acid sequence, 171 residues long: Plastocyanin minor isoform, chloroplastic (171 aa).

A Plastocyanin-like domain is found at 73-171 (MEVLLGSDDG…AGMVGKLTVK (99 aa)). 4 residues coordinate Cu cation: His109, Cys156, His159, and Met164.

It belongs to the plastocyanin family. Requires Cu(2+) as cofactor.

It localises to the plastid. The protein localises to the chloroplast thylakoid membrane. In terms of biological role, participates in electron transfer between P700 and the cytochrome b6-f complex in photosystem I. Seems to be a minor plastocyanin in Arabidopsis. The chain is Plastocyanin minor isoform, chloroplastic (PETE) from Arabidopsis thaliana (Mouse-ear cress).